A 44-amino-acid polypeptide reads, in one-letter code: Thymosin beta-4 (44 aa).

The segment covering 1-25 has biased composition (basic and acidic residues); sequence MSDKPDMAEIEKFDKSKLKKTETQE. Positions 1–44 are disordered; the sequence is MSDKPDMAEIEKFDKSKLKKTETQEKNPLPSKETIEQEKQAGES. Ser2 is modified (N-acetylserine). The residue at position 2 (Ser2) is a Phosphoserine. Lys4 carries the N6-acetyllysine modification. Lys12 is modified (N6-acetyllysine; alternate). Lys12 participates in a covalent cross-link: Glycyl lysine isopeptide (Lys-Gly) (interchain with G-Cter in SUMO2); alternate. Thr23 is modified (phosphothreonine). Residue Lys26 is modified to N6-acetyllysine. At Ser31 the chain carries Phosphoserine. At Lys32 the chain carries N6-acetyllysine. The segment covering 33-44 has biased composition (basic and acidic residues); that stretch reads ETIEQEKQAGES. Residue Thr34 is modified to Phosphothreonine. An N6-acetyllysine modification is found at Lys39.

This sequence belongs to the thymosin beta family. As to quaternary structure, identified in a complex composed of ACTA1, COBL, GSN AND TMSB4X. Interacts with SERPINB1. AcSDKP is inactivated by ACE, which removes the dipeptide Lys-Pro from its C-terminus.

It localises to the cytoplasm. The protein resides in the cytoskeleton. Functionally, plays an important role in the organization of the cytoskeleton. Binds to and sequesters actin monomers (G actin) and therefore inhibits actin polymerization. Its function is as follows. Potent inhibitor of bone marrow derived stem cell differentiation. Acts by inhibits the entry of hematopoietic pluripotent stem cells into the S-phase. The polypeptide is Thymosin beta-4 (TMSB4) (Bos taurus (Bovine)).